The chain runs to 312 residues: Malate dehydrogenase (312 aa).

NAD(+) contacts are provided by residues Gly7–Gly13 and Asp34. Substrate-binding residues include Arg81 and Arg87. NAD(+)-binding positions include Asn94 and Ile117–Asn119. The substrate site is built by Asn119 and Arg153. Residue His177 is the Proton acceptor of the active site. NAD(+) is bound at residue Met227.

It belongs to the LDH/MDH superfamily. MDH type 1 family. Homodimer.

It carries out the reaction (S)-malate + NAD(+) = oxaloacetate + NADH + H(+). In terms of biological role, catalyzes the reversible oxidation of malate to oxaloacetate. This Escherichia coli (strain 55989 / EAEC) protein is Malate dehydrogenase.